A 102-amino-acid polypeptide reads, in one-letter code: Putative septation protein SpoVG 1 (102 aa).

This sequence belongs to the SpoVG family.

Could be involved in septation. The chain is Putative septation protein SpoVG 1 from Listeria monocytogenes serotype 4b (strain F2365).